The sequence spans 671 residues: MPSLMLSDKKEEKKMKKKMALDTPELDSKKGKKEQKLKLSDSDEEESEKKKSKKKDKKRKASEEEDEVKSDSSSEKKKSSKKVKLGVEDVEVDNPNAVSKFRISAPLREKLKANGIEALFPIQASTFDMVLDGADLVGRARTGQGKTLAFVLPILESLVNGPAKSKRKMGYGRSPSVLVLLPTRELAKQVAADFDAYGGSLGLSSCCLYGGDSYPVQEGKLKRGVDIVVGTPGRIKDHIERQNLDFSYLQFRVLDEADEMLRMGFVEDVELILGKVEDSTKVQTLLFSATLPSWVKNISNRFLKRDQKTIDLVGNDKMKASNSVRHIAIPCNKAAMARLIPDIISCYSSGGQTIIFAETKVQVSELSGLLDGSRALHGEIPQSQREVTLAGFRNGKFATLVATNVAARGLDINDVQLIIQCEPPREVEAYIHRSGRTGRAGNTGVAVTLYDSRKSSVSRIEKEAGIKFEHLAAPQPDEIARSGGMEAAEKVKQVCDSVVPAFLEAAKELLETSGLSAEVLLAKALAKTAGFTEIKKRSLLTSMENYVTLHLEAGKPIYSPSFVYGLLRRVLPDDKVEMIEGLSLTADKTGAVFDVKQSDLDLFIAGAQKSAGSMSLEVVKVMPKLQEREPLPQKRFGGGGRGNRFGGGGGNRFGGGGGRGRGGSGGRGQRY.

Residues 1-84 (MPSLMLSDKK…EKKKSSKKVK (84 aa)) form a disordered region. A compositionally biased stretch (basic and acidic residues) spans 26 to 41 (LDSKKGKKEQKLKLSD). S40 and S42 each carry phosphoserine. Over residues 50-60 (KKSKKKDKKRK) the composition is skewed to basic residues. The Q motif signature appears at 96–124 (NAVSKFRISAPLREKLKANGIEALFPIQA). Positions 127 to 309 (FDMVLDGADL…NRFLKRDQKT (183 aa)) constitute a Helicase ATP-binding domain. Residue 140 to 147 (ARTGQGKT) participates in ATP binding. Positions 255-258 (DEAD) match the DEAD box motif. One can recognise a Helicase C-terminal domain in the interval 339-479 (LIPDIISCYS…HLAAPQPDEI (141 aa)). Positions 627–671 (EREPLPQKRFGGGGRGNRFGGGGGNRFGGGGGRGRGGSGGRGQRY) are disordered. The segment covering 636–671 (FGGGGRGNRFGGGGGNRFGGGGGRGRGGSGGRGQRY) has biased composition (gly residues).

This sequence belongs to the DEAD box helicase family. DDX21/DDX50 subfamily.

It is found in the nucleus. It carries out the reaction ATP + H2O = ADP + phosphate + H(+). This chain is DEAD-box ATP-dependent RNA helicase 7 (RH7), found in Arabidopsis thaliana (Mouse-ear cress).